The following is a 69-amino-acid chain: Cytochrome c oxidase subunit 8A, mitochondrial (69 aa).

A mitochondrion-targeting transit peptide spans 1-25 (MSVLTSLLLRGLTGSARRLPVPRAK). Residues 2–19 (SVLTSLLLRGLTGSARRL) carry the SIFI-degron motif. Over 26 to 36 (VHSMPPEEELG) the chain is Mitochondrial matrix. Residues 37 to 60 (TLEKAIALTSCFVSLFLPAGWILS) form a helical membrane-spanning segment. Residues 61–69 (HLEDYKRPE) lie on the Mitochondrial intermembrane side of the membrane.

This sequence belongs to the cytochrome c oxidase VIII family. Component of the cytochrome c oxidase (complex IV, CIV), a multisubunit enzyme composed of 14 subunits. The complex is composed of a catalytic core of 3 subunits MT-CO1, MT-CO2 and MT-CO3, encoded in the mitochondrial DNA, and 11 supernumerary subunits COX4I, COX5A, COX5B, COX6A, COX6B, COX6C, COX7A, COX7B, COX7C, COX8 and NDUFA4, which are encoded in the nuclear genome. The complex exists as a monomer or a dimer and forms supercomplexes (SCs) in the inner mitochondrial membrane with NADH-ubiquinone oxidoreductase (complex I, CI) and ubiquinol-cytochrome c oxidoreductase (cytochrome b-c1 complex, complex III, CIII), resulting in different assemblies (supercomplex SCI(1)III(2)IV(1) and megacomplex MCI(2)III(2)IV(2)). Post-translationally, in response to mitochondrial stress, the precursor protein is ubiquitinated by the SIFI complex in the cytoplasm before mitochondrial import, leading to its degradation. Within the SIFI complex, UBR4 initiates ubiquitin chain that are further elongated or branched by KCMF1.

Its subcellular location is the mitochondrion inner membrane. Its pathway is energy metabolism; oxidative phosphorylation. Functionally, component of the cytochrome c oxidase, the last enzyme in the mitochondrial electron transport chain which drives oxidative phosphorylation. The respiratory chain contains 3 multisubunit complexes succinate dehydrogenase (complex II, CII), ubiquinol-cytochrome c oxidoreductase (cytochrome b-c1 complex, complex III, CIII) and cytochrome c oxidase (complex IV, CIV), that cooperate to transfer electrons derived from NADH and succinate to molecular oxygen, creating an electrochemical gradient over the inner membrane that drives transmembrane transport and the ATP synthase. Cytochrome c oxidase is the component of the respiratory chain that catalyzes the reduction of oxygen to water. Electrons originating from reduced cytochrome c in the intermembrane space (IMS) are transferred via the dinuclear copper A center (CU(A)) of subunit 2 and heme A of subunit 1 to the active site in subunit 1, a binuclear center (BNC) formed by heme A3 and copper B (CU(B)). The BNC reduces molecular oxygen to 2 water molecules using 4 electrons from cytochrome c in the IMS and 4 protons from the mitochondrial matrix. The polypeptide is Cytochrome c oxidase subunit 8A, mitochondrial (COX8A) (Papio anubis (Olive baboon)).